Reading from the N-terminus, the 87-residue chain is DNA-directed RNA polymerase subunit omega (87 aa).

Belongs to the RNA polymerase subunit omega family. As to quaternary structure, the RNAP catalytic core consists of 2 alpha, 1 beta, 1 beta' and 1 omega subunit. When a sigma factor is associated with the core the holoenzyme is formed, which can initiate transcription.

It catalyses the reaction RNA(n) + a ribonucleoside 5'-triphosphate = RNA(n+1) + diphosphate. In terms of biological role, promotes RNA polymerase assembly. Latches the N- and C-terminal regions of the beta' subunit thereby facilitating its interaction with the beta and alpha subunits. The protein is DNA-directed RNA polymerase subunit omega of Pseudomonas fluorescens (strain SBW25).